The primary structure comprises 1451 residues: Dual 3',5'-cyclic-AMP and -GMP phosphodiesterase 11 (1451 aa).

5 disordered regions span residues methionine 1–glutamine 54, alanine 75–glycine 100, leucine 125–glutamine 169, glycine 235–threonine 262, and glutamine 327–glycine 374. Residues arginine 11–serine 21 are compositionally biased toward basic residues. The segment covering glutamine 24 to glutamine 45 has biased composition (low complexity). The span at threonine 77–glutamine 91 shows a compositional bias: polar residues. Composition is skewed to low complexity over residues serine 135 to serine 147 and glutamine 160 to glutamine 169. Over residues glycine 235–asparagine 248 the composition is skewed to polar residues. The segment covering glutamine 327 to histidine 340 has biased composition (basic residues). The segment covering serine 341–glycine 355 has biased composition (low complexity). A compositionally biased stretch (gly residues) spans serine 356 to glycine 374. 2 GAF domains span residues glutamate 419–leucine 572 and threonine 604–isoleucine 754. A PDEase domain is found at alanine 783–valine 1107. The active-site Proton donor is the histidine 860. Residues histidine 864, histidine 900, aspartate 901, and aspartate 1011 each contribute to the a divalent metal cation site. 4 disordered regions span residues threonine 1109 to asparagine 1171, aspartate 1200 to serine 1248, glutamine 1268 to aspartate 1305, and isoleucine 1325 to alanine 1364. Low complexity-rich tracts occupy residues alanine 1142–asparagine 1171 and cysteine 1218–serine 1234. The segment covering glutamine 1268–lysine 1277 has biased composition (polar residues). Residues histidine 1328–serine 1355 show a composition bias toward basic residues.

This sequence belongs to the cyclic nucleotide phosphodiesterase family. It depends on a divalent metal cation as a cofactor. In adults, it is enriched in Malpighian tubules.

It catalyses the reaction 3',5'-cyclic GMP + H2O = GMP + H(+). The enzyme catalyses 3',5'-cyclic AMP + H2O = AMP + H(+). In terms of biological role, plays a role in signal transduction by regulating the intracellular concentration of cyclic nucleotides cAMP and cGMP. Dual-specificity phosphodiesterase that catalyzes the hydrolysis of both cAMP and cGMP to 5'-AMP and 5'-GMP, respectively. The chain is Dual 3',5'-cyclic-AMP and -GMP phosphodiesterase 11 (Pde11) from Drosophila melanogaster (Fruit fly).